Consider the following 431-residue polypeptide: Na(+)-translocating NADH-quinone reductase subunit F (431 aa).

Residues 9 to 29 form a helical membrane-spanning segment; the sequence is FICIASLIFCAIGVILAGVIL. The 2Fe-2S ferredoxin-type domain maps to 39 to 133; sequence HPCKLKINDN…DMSLEIEERY (95 aa). [2Fe-2S] cluster-binding residues include C76, C82, C85, and C117. Residues 136–286 form the FAD-binding FR-type domain; that stretch reads ASSWEGTVIS…SGPYGESFMK (151 aa). Residues 289–413 are catalytic; the sequence is DRPLIFLIGG…PLHNSSILKL (125 aa).

The protein belongs to the NqrF family. In terms of assembly, composed of six subunits; NqrA, NqrB, NqrC, NqrD, NqrE and NqrF. Requires [2Fe-2S] cluster as cofactor. The cofactor is FAD.

Its subcellular location is the cell inner membrane. The catalysed reaction is a ubiquinone + n Na(+)(in) + NADH + H(+) = a ubiquinol + n Na(+)(out) + NAD(+). In terms of biological role, NQR complex catalyzes the reduction of ubiquinone-1 to ubiquinol by two successive reactions, coupled with the transport of Na(+) ions from the cytoplasm to the periplasm. The first step is catalyzed by NqrF, which accepts electrons from NADH and reduces ubiquinone-1 to ubisemiquinone by a one-electron transfer pathway. This chain is Na(+)-translocating NADH-quinone reductase subunit F, found in Chlamydia pneumoniae (Chlamydophila pneumoniae).